A 302-amino-acid polypeptide reads, in one-letter code: Sulfate adenylyltransferase subunit 2 (302 aa).

The protein belongs to the PAPS reductase family. CysD subfamily. In terms of assembly, heterodimer composed of CysD, the smaller subunit, and CysN.

The catalysed reaction is sulfate + ATP + H(+) = adenosine 5'-phosphosulfate + diphosphate. It participates in sulfur metabolism; hydrogen sulfide biosynthesis; sulfite from sulfate: step 1/3. With CysN forms the ATP sulfurylase (ATPS) that catalyzes the adenylation of sulfate producing adenosine 5'-phosphosulfate (APS) and diphosphate, the first enzymatic step in sulfur assimilation pathway. APS synthesis involves the formation of a high-energy phosphoric-sulfuric acid anhydride bond driven by GTP hydrolysis by CysN coupled to ATP hydrolysis by CysD. The sequence is that of Sulfate adenylyltransferase subunit 2 from Xanthomonas axonopodis pv. citri (strain 306).